A 316-amino-acid chain; its full sequence is Ribosomal RNA small subunit methyltransferase H (316 aa).

S-adenosyl-L-methionine is bound by residues 35 to 37, aspartate 55, phenylalanine 84, aspartate 105, and glutamine 112; that span reads AGH.

It belongs to the methyltransferase superfamily. RsmH family.

Its subcellular location is the cytoplasm. The enzyme catalyses cytidine(1402) in 16S rRNA + S-adenosyl-L-methionine = N(4)-methylcytidine(1402) in 16S rRNA + S-adenosyl-L-homocysteine + H(+). In terms of biological role, specifically methylates the N4 position of cytidine in position 1402 (C1402) of 16S rRNA. The protein is Ribosomal RNA small subunit methyltransferase H of Streptococcus pneumoniae (strain JJA).